Here is a 1238-residue protein sequence, read N- to C-terminus: Anion exchange protein 2 (1238 aa).

A disordered region spans residues 1–238; sequence MSGTPRRPAS…YNLQERRRIG (238 aa). Residues 1–704 are Cytoplasmic-facing; that stretch reads MSGTPRRPAS…SDFRDALDPQ (704 aa). Composition is skewed to basic and acidic residues over residues 37–49 and 58–75; these read DLHR…RFEE and GGEE…EYHR. 2 stretches are compositionally biased toward basic residues: residues 76-85 and 94-110; these read QSSHHIHHPL and RRRK…RRRP. Over residues 120 to 133 the composition is skewed to acidic residues; it reads TIEEGEEDEDETSE. Residues S132, S144, S170, and S172 each carry the phosphoserine modification. The span at 141 to 154 shows a compositional bias: polar residues; the sequence is TDPSPASTPTSVQF. Over residues 205-215 the composition is skewed to gly residues; sequence GTAGGDDGGAS. Phosphoserine is present on S239. T253 bears the Phosphothreonine mark. Position 270 is an N6-methyllysine (K270). Positions 277–315 are disordered; it reads VPGVRRHLVRKNAKGSSQSSREGREPGPTPRTRPRAPHK. The span at 280-289 shows a compositional bias: basic residues; that stretch reads VRRHLVRKNA. Residue S439 is modified to Phosphoserine. The interval 445-466 is disordered; it reads SLLGHHHTQGAESDPHVTEPLI. 4 consecutive transmembrane segments (helical) span residues 705-728, 734-771, 791-813, and 823-844; these read CLAA…GLLG, LIGV…LLVF, VWIG…SFLV, and IFAF…VKIF. The segment at 705 to 1238 is membrane (anion exchange); sequence CLAAVIFIYF…DEYNEMPMPV (534 aa). At 845–897 the chain is on the extracellular side; that stretch reads QEHPLHGCLASNSSEADGGKNTTWTEAAPTPGHGNTSSAEQAGVERPQGQPNT. N856, N865, and N879 each carry an N-linked (GlcNAc...) asparagine glycan. A compositionally biased stretch (polar residues) spans 858 to 869; the sequence is SEADGGKNTTWT. The disordered stretch occupies residues 858 to 892; sequence SEADGGKNTTWTEAAPTPGHGNTSSAEQAGVERPQ. A helical membrane pass occupies residues 898–915; the sequence is ALLSLVLMAGTFFIAFFL. At 916–930 the chain is on the cytoplasmic side; that stretch reads RKFKNSRFFPGRIRR. 5 helical membrane-spanning segments follow: residues 931–951, 985–1007, 1033–1054, 1088–1133, and 1160–1196; these read VIGD…DYSI, PFPV…LIFM, LLLI…LAAA, VTGL…IQFY, and MHLF…TVPL. Residue C1170 is the site of S-palmitoyl cysteine attachment.

Belongs to the anion exchanger (TC 2.A.31) family. Expressed in the cochlea (at protein level).

The protein localises to the apical cell membrane. Its subcellular location is the basolateral cell membrane. The catalysed reaction is hydrogencarbonate(in) + chloride(out) = hydrogencarbonate(out) + chloride(in). Sodium-independent anion exchanger which mediates the electroneutral exchange of chloride for bicarbonate ions across the cell membrane. Plays an important role in osteoclast differentiation and function. Regulates bone resorption and calpain-dependent actin cytoskeleton organization in osteoclasts via anion exchange-dependent control of pH. Essential for intracellular pH regulation in CD8(+) T-cells upon CD3 stimulation, modulating CD8(+) T-cell response. The polypeptide is Anion exchange protein 2 (SLC4A2) (Cavia porcellus (Guinea pig)).